The chain runs to 342 residues: Trans-3-hydroxy-L-proline dehydratase (342 aa).

Residue serine 90 is the Proton acceptor of the active site. Substrate contacts are provided by residues 91 to 92 (GS), aspartate 252, and 257 to 258 (GT).

It belongs to the proline racemase family.

The catalysed reaction is trans-3-hydroxy-L-proline = 1-pyrroline-2-carboxylate + H2O. Catalyzes the dehydration of trans-3-hydroxy-L-proline (t3LHyp) to Delta(1)-pyrroline-2-carboxylate (Pyr2C). Can also catalyze the epimerization of trans-4-hydroxy-L-proline (t4LHyp) to cis-4-hydroxy-D-proline (c4DHyp), albeit with 150-fold lower efficiency. May be involved in the degradation pathway that converts t3LHyp to L-proline, which would allow R.meliloti to grow on t3LHyp as a sole carbon source. Displays no proline racemase activity. The chain is Trans-3-hydroxy-L-proline dehydratase from Rhizobium meliloti (strain 1021) (Ensifer meliloti).